A 465-amino-acid chain; its full sequence is Ribulose bisphosphate carboxylase large chain (465 aa).

Residue Lys-4 is modified to N6,N6,N6-trimethyllysine. Residues Asn-113 and Thr-163 each coordinate substrate. The active-site Proton acceptor is Lys-165. Lys-167 is a binding site for substrate. Positions 191, 193, and 194 each coordinate Mg(2+). At Lys-191 the chain carries N6-carboxylysine. His-284 acts as the Proton acceptor in catalysis. Residues Arg-285, His-317, and Ser-369 each contribute to the substrate site.

This sequence belongs to the RuBisCO large chain family. Type I subfamily. As to quaternary structure, heterohexadecamer of 8 large chains and 8 small chains; disulfide-linked. The disulfide link is formed within the large subunit homodimers. Mg(2+) is required as a cofactor. In terms of processing, the disulfide bond which can form in the large chain dimeric partners within the hexadecamer appears to be associated with oxidative stress and protein turnover.

It localises to the plastid. It is found in the chloroplast. The enzyme catalyses 2 (2R)-3-phosphoglycerate + 2 H(+) = D-ribulose 1,5-bisphosphate + CO2 + H2O. The catalysed reaction is D-ribulose 1,5-bisphosphate + O2 = 2-phosphoglycolate + (2R)-3-phosphoglycerate + 2 H(+). In terms of biological role, ruBisCO catalyzes two reactions: the carboxylation of D-ribulose 1,5-bisphosphate, the primary event in carbon dioxide fixation, as well as the oxidative fragmentation of the pentose substrate in the photorespiration process. Both reactions occur simultaneously and in competition at the same active site. This chain is Ribulose bisphosphate carboxylase large chain, found in Cornus oblonga.